We begin with the raw amino-acid sequence, 493 residues long: Monocarboxylate transporter 1 (493 aa).

The Cytoplasmic segment spans residues 1 to 22 (MPPAIGGPVGYTPPDGGWGWAV). Residues 23–44 (LVGAFISIGFSYAFPKSITVFF) form a helical membrane-spanning segment. Residue K38 coordinates (S)-lactate. Residues 45-55 (KEIEVIFSATT) are Extracellular-facing. Residues 56–80 (SEVSWISSIMLAVMYAGGPISSILV) form a helical membrane-spanning segment. Residues 81–84 (NKYG) are Cytoplasmic-facing. The chain crosses the membrane as a helical span at residues 85–105 (SRPVMIAGGCLSGCGLIAASF). The Extracellular segment spans residues 106–109 (CNTV). A helical transmembrane segment spans residues 110–132 (QELYLCIGVIGGLGLAFNLNPAL). Over 133-146 (TMIGKYFYKKRPLA) the chain is Cytoplasmic. The chain crosses the membrane as a helical span at residues 147–169 (NGLAMAGSPVFLSTLAPLNQAFF). The Extracellular segment spans residues 170 to 174 (DIFDW). The chain crosses the membrane as a helical span at residues 175–194 (RGSFLILGGLLLNCCVAGSL). Residues 195–254 (MRPIGPEQVKLEKLKSKESLQEAGKSDANTDLIGGSPKGEKLSVFQTINKFLDLSLFTHR) are Cytoplasmic-facing. 3 positions are modified to phosphoserine: S210, S213, and S220. Residue T224 is modified to Phosphothreonine. S230 carries the post-translational modification Phosphoserine. Residues 255–281 (GFLLYLSGNVVMFFGLFTPLVFLSSYG) traverse the membrane as a helical segment. The Extracellular segment spans residues 282–288 (KSKDFSS). The chain crosses the membrane as a helical span at residues 289–310 (EKSAFLLSILAFVDMVARPSMG). A H(+)-binding site is contributed by D302. R306 contacts (S)-lactate. Residues 311-321 (LAANTKWIRPR) are Cytoplasmic-facing. The chain crosses the membrane as a helical span at residues 322-342 (IQYFFAASVVANGVCHLLAPL). At 343-346 (STTY) the chain is on the extracellular side. A helical transmembrane segment spans residues 347–368 (VGFCVYAGVFGFAFGWLSSVLF). Residues 369–382 (ETLMDLIGPQRFSS) are Cytoplasmic-facing. Residues 383–403 (AVGLVTIVECCPVLLGPPLLG) traverse the membrane as a helical segment. Residues 404 to 414 (RLNDMYGDYKY) are Extracellular-facing. Residues 415–436 (TYWACGVILIIAGIYLFIGMGI) form a helical membrane-spanning segment. At 437–493 (NYRLLAKEQKAEEKQKREGKEDEASTDVDEKPKETMKAAQSPQQHSSGDPTEEESPV) the chain is on the cytoplasmic side. Over residues 447–472 (AEEKQKREGKEDEASTDVDEKPKETM) the composition is skewed to basic and acidic residues. Positions 447–493 (AEEKQKREGKEDEASTDVDEKPKETMKAAQSPQQHSSGDPTEEESPV) are disordered. S461 is subject to Phosphoserine. At T462 the chain carries Phosphothreonine. Positions 474-485 (AAQSPQQHSSGD) are enriched in polar residues. Residues S477, S482, S483, and S491 each carry the phosphoserine modification.

Belongs to the major facilitator superfamily. Monocarboxylate porter (TC 2.A.1.13) family. Interacts with isoform 2 of BSG; interaction mediates SLC16A1 targeting to the plasma membrane. Interacts with EMB; interaction mediates SLC16A1 targeting to the plasma membrane. Detected in liver, brain, spinal cord, spermatozoa, muscle, white adipose tissue and brown adipose tissue (at protein level). Widely expressed, except in pancreas, where expression is not detectable.

The protein resides in the cell membrane. It is found in the basolateral cell membrane. Its subcellular location is the apical cell membrane. It carries out the reaction (S)-lactate(in) + H(+)(in) = (S)-lactate(out) + H(+)(out). It catalyses the reaction acetate(out) + H(+)(out) = acetate(in) + H(+)(in). The enzyme catalyses acetoacetate(out) + H(+)(out) = acetoacetate(in) + H(+)(in). The catalysed reaction is pyruvate(out) + H(+)(out) = pyruvate(in) + H(+)(in). It carries out the reaction (R)-3-hydroxybutanoate(out) + H(+)(out) = (R)-3-hydroxybutanoate(in) + H(+)(in). It catalyses the reaction 3-methyl-2-oxobutanoate(out) + H(+)(out) = 3-methyl-2-oxobutanoate(in) + H(+)(in). The enzyme catalyses 4-methyl-2-oxopentanoate(out) + H(+)(out) = 4-methyl-2-oxopentanoate(in) + H(+)(in). The catalysed reaction is succinate(in) + 2 H(+)(in) = succinate(out) + 2 H(+)(out). In terms of biological role, bidirectional proton-coupled monocarboxylate transporter. Catalyzes the rapid transport across the plasma membrane of many monocarboxylates such as lactate, pyruvate, acetate and the ketone bodies acetoacetate and beta-hydroxybutyrate, and thus contributes to the maintenance of intracellular pH. The transport direction is determined by the proton motive force and the concentration gradient of the substrate monocarboxylate. MCT1 is a major lactate exporter. Plays a role in cellular responses to a high-fat diet by modulating the cellular levels of lactate and pyruvate that contribute to the regulation of central metabolic pathways and insulin secretion, with concomitant effects on plasma insulin levels and blood glucose homeostasis. Facilitates the protonated monocarboxylate form of succinate export, that its transient protonation upon muscle cell acidification in exercising muscle and ischemic heart. Functions via alternate outward- and inward-open conformation states. Protonation and deprotonation of 302-Asp is essential for the conformational transition. This chain is Monocarboxylate transporter 1 (Slc16a1), found in Mus musculus (Mouse).